A 462-amino-acid polypeptide reads, in one-letter code: Peroxisomal membrane protein PEX31 (462 aa).

Residues 1 to 19 (MSEINNENLEPTSSTVAES) show a composition bias toward polar residues. The disordered stretch occupies residues 1–26 (MSEINNENLEPTSSTVAESTESKNKH). At 1-90 (MSEINNENLE…LSIITWSNDN (90 aa)) the chain is on the cytoplasmic side. A helical membrane pass occupies residues 91-111 (VSANLLGIFLFTVCVLYFGFI). Residues 112-175 (TRYFGHLMIV…TILSAQDVRR (64 aa)) are Peroxisomal-facing. A helical transmembrane segment spans residues 176-196 (LLFTIAFLSPVYIFLTVFVLS). At 197–462 (PNYLMLIGGL…ISDVSMSPSL (266 aa)) the chain is on the cytoplasmic side. Residues 406-425 (PTVEKATPNSHALKSEENNR) are disordered. S432 is modified (phosphoserine). Residue T435 is modified to Phosphothreonine.

This sequence belongs to the PEX28-32 family. PEX30/31 subfamily.

The protein localises to the peroxisome membrane. The polypeptide is Peroxisomal membrane protein PEX31 (PEX31) (Saccharomyces cerevisiae (strain ATCC 204508 / S288c) (Baker's yeast)).